The sequence spans 384 residues: Putative D-galactosamine-6-phosphate deaminase AgaS (384 aa).

SIS domains are found at residues 45–197 (LEPL…SQTF) and 215–364 (SEGV…PDTP).

It belongs to the SIS family. AgaS subfamily.

It carries out the reaction D-galactosamine 6-phosphate + H2O = D-tagatopyranose 1-phosphate + NH4(+). Functionally, catalyzes the isomerization-deamination of galactosamine 6-phosphate to form tagatofuranose 6-phosphate and ammonium ion. This is Putative D-galactosamine-6-phosphate deaminase AgaS (agaS) from Escherichia coli (strain K12).